Here is a 497-residue protein sequence, read N- to C-terminus: Malonate-semialdehyde dehydrogenase (497 aa).

NAD(+)-binding residues include phenylalanine 148, lysine 172, glutamate 175, arginine 176, and serine 225. Cysteine 280 functions as the Nucleophile in the catalytic mechanism. An NAD(+)-binding site is contributed by glutamate 382.

Belongs to the aldehyde dehydrogenase family.

The catalysed reaction is 3-oxopropanoate + NAD(+) + CoA + H2O = hydrogencarbonate + acetyl-CoA + NADH + H(+). Involved in the degradation of beta-alanine. Likely catalyzes the NAD(+)- and CoA-dependent oxidative decarboxylation of malonate semialdehyde (3-oxopropanoate) to acetyl-CoA. This is Malonate-semialdehyde dehydrogenase from Pseudomonas aeruginosa (strain ATCC 15692 / DSM 22644 / CIP 104116 / JCM 14847 / LMG 12228 / 1C / PRS 101 / PAO1).